The sequence spans 490 residues: Probable cytosol aminopeptidase (490 aa).

The Mn(2+) site is built by Lys262 and Asp267. Lys274 is a catalytic residue. The Mn(2+) site is built by Asp285, Asp344, and Glu346. Residue Arg348 is part of the active site.

The protein belongs to the peptidase M17 family. Mn(2+) serves as cofactor.

It is found in the cytoplasm. The enzyme catalyses Release of an N-terminal amino acid, Xaa-|-Yaa-, in which Xaa is preferably Leu, but may be other amino acids including Pro although not Arg or Lys, and Yaa may be Pro. Amino acid amides and methyl esters are also readily hydrolyzed, but rates on arylamides are exceedingly low.. It catalyses the reaction Release of an N-terminal amino acid, preferentially leucine, but not glutamic or aspartic acids.. Its function is as follows. Presumably involved in the processing and regular turnover of intracellular proteins. Catalyzes the removal of unsubstituted N-terminal amino acids from various peptides. In Xanthomonas axonopodis pv. citri (strain 306), this protein is Probable cytosol aminopeptidase.